The primary structure comprises 520 residues: Intermediate filament protein ON3 (520 aa).

Residues M1–S27 show a composition bias toward low complexity. The interval M1–V33 is disordered. The segment at M1–Q108 is head. Residues E109 to L144 form a coil 1A region. An IF rod domain is found at E109 to L420. Residues Q145–M157 are linker 1. Residues F158–L253 are coil 1B. The segment at Q254–D273 is linker 12. The tract at residues M274–L420 is coil 2. The tail stretch occupies residues L421 to D520.

The protein belongs to the intermediate filament family.

One of the non-neuronal predominant intermediate filament proteins of the visual pathway. In Carassius auratus (Goldfish), this protein is Intermediate filament protein ON3.